Reading from the N-terminus, the 435-residue chain is tRNA(Ile)-lysidine synthase (435 aa).

An ATP-binding site is contributed by 25–30 (SGGLDS).

Belongs to the tRNA(Ile)-lysidine synthase family.

Its subcellular location is the cytoplasm. It carries out the reaction cytidine(34) in tRNA(Ile2) + L-lysine + ATP = lysidine(34) in tRNA(Ile2) + AMP + diphosphate + H(+). In terms of biological role, ligates lysine onto the cytidine present at position 34 of the AUA codon-specific tRNA(Ile) that contains the anticodon CAU, in an ATP-dependent manner. Cytidine is converted to lysidine, thus changing the amino acid specificity of the tRNA from methionine to isoleucine. The sequence is that of tRNA(Ile)-lysidine synthase from Photobacterium profundum (strain SS9).